Reading from the N-terminus, the 1807-residue chain is Atrochrysone carboxylic acid synthase Agnpks1 (1807 aa).

The interval 41 to 173 (LFRELHNHSK…ITGAQVIRQA (133 aa)) is N-terminal acylcarrier protein transacylase domain (SAT). Positions 411–845 (QSKIAIVGMS…GGNTTILLEE (435 aa)) constitute a Ketosynthase family 3 (KS3) domain. Residues Cys-584, His-720, and His-763 each act as for beta-ketoacyl synthase activity in the active site. The tract at residues 946 to 1265 (FTFTGQGASY…SLAALHCAGV (320 aa)) is malonyl-CoA:ACP transacylase (MAT) domain. Residues 1334–1653 (TSTVHQIIQE…RILLSRFFSA (320 aa)) form a product template (PT) domain region. An N-terminal hotdog fold region spans residues 1338 to 1473 (HQIIQESIDG…ATLIYGDPSE (136 aa)). The PKS/mFAS DH domain maps to 1338–1648 (HQIIQESIDG…FRRYPRILLS (311 aa)). His-1370 serves as the catalytic Proton acceptor; for dehydratase activity. The interval 1500–1648 (VANRFNHQMA…FRRYPRILLS (149 aa)) is C-terminal hotdog fold. The active-site Proton donor; for dehydratase activity is the Asp-1559. Positions 1732-1806 (DTTTAKAIQI…DLRSWLEEYY (75 aa)) constitute a Carrier domain. O-(pantetheine 4'-phosphoryl)serine is present on Ser-1766.

The enzyme catalyses holo-[ACP] + 8 malonyl-CoA + 8 H(+) = atrochrysone carboxyl-[ACP] + 8 CO2 + 8 CoA + 2 H2O. It functions in the pathway secondary metabolite biosynthesis. Non-reducing polyketide synthase; part of the gene cluster that mediates the biosynthesis of agnestins, dihydroxy-xanthone metabolites. The pathway begins with the assembly and cyclization of atrochrysone thioester by the non-reducing polyketide synthase Agnpks1. The atrochrysone carboxyl ACP thioesterase AgnL7 then breaks the thioester bond and releases the atrochrysone carboxylic acid as the first enzyme-free intermediate. The decarboxylase AgnL1 then catalyzes the concerted decarboxylation-elimination required to convert atochrysone carboxylic acid into emodin anthrone, which is further oxidized to emodin by the anthrone oxygenase AgnL2. Emodin then undergoes reduction catalyzed by the oxidoreductase AgnL4 to yield the dihydroquinone tautomer which is the substrate for reduction by the short chain dehydrogenase AgnL6 reduction to produce hydroxyketone, followed by AgnL8 dehydration and likely spontaneous autoxidation to chrysophanol. Baeyer-Villiger oxidation by the oxidase AgnL3 leads to monodictyphenone via cleavage of the C-10/C-10a bond of chrysophanol. Alternative cleavage at the C-4a/C-10 bond of chrysophanol also leads to the formation some cephalone F. Further conversion to agnestins A and B, requires reduction to dihydro-monodictyphenone, oxidation to agnestin C probably via an epoxide, and rearrangement to either agnestin A or agnestin B directly, although agnestin A or agnestin B can also interconvert. Within the cluster, AgnR1 is the only unassigned oxidoreductase present which could be involved in this conversion. However, AgnR1 seems not to be involved in this step, and thus genes involved in the proposed oxidation/reduction may be located elsewhere on the genome. Further agnestin A derivatives are probably formed by spontaneous decarboxylations, dehydrations and methanolysis reactions. In Paecilomyces divaricatus (Penicillium divaricatum), this protein is Atrochrysone carboxylic acid synthase Agnpks1.